Consider the following 390-residue polypeptide: Putative nickel insertion protein (390 aa).

Belongs to the LarC family.

This Myxococcus xanthus (strain DK1622) protein is Putative nickel insertion protein.